We begin with the raw amino-acid sequence, 569 residues long: 2-succinyl-5-enolpyruvyl-6-hydroxy-3-cyclohexene-1-carboxylate synthase (569 aa).

The protein belongs to the TPP enzyme family. MenD subfamily. In terms of assembly, homodimer. It depends on Mg(2+) as a cofactor. The cofactor is Mn(2+). Thiamine diphosphate is required as a cofactor.

The enzyme catalyses isochorismate + 2-oxoglutarate + H(+) = 5-enolpyruvoyl-6-hydroxy-2-succinyl-cyclohex-3-ene-1-carboxylate + CO2. It functions in the pathway quinol/quinone metabolism; 1,4-dihydroxy-2-naphthoate biosynthesis; 1,4-dihydroxy-2-naphthoate from chorismate: step 2/7. The protein operates within quinol/quinone metabolism; menaquinone biosynthesis. In terms of biological role, catalyzes the thiamine diphosphate-dependent decarboxylation of 2-oxoglutarate and the subsequent addition of the resulting succinic semialdehyde-thiamine pyrophosphate anion to isochorismate to yield 2-succinyl-5-enolpyruvyl-6-hydroxy-3-cyclohexene-1-carboxylate (SEPHCHC). In Haemophilus ducreyi (strain 35000HP / ATCC 700724), this protein is 2-succinyl-5-enolpyruvyl-6-hydroxy-3-cyclohexene-1-carboxylate synthase.